We begin with the raw amino-acid sequence, 387 residues long: Phosphoglycerate kinase (387 aa).

Residues 21-23 (DLN), arginine 36, 59-62 (HLGR), arginine 113, and arginine 146 each bind substrate. ATP-binding positions include lysine 197, glutamate 314, and 340 to 343 (GGDT).

The protein belongs to the phosphoglycerate kinase family. As to quaternary structure, monomer.

Its subcellular location is the cytoplasm. The catalysed reaction is (2R)-3-phosphoglycerate + ATP = (2R)-3-phospho-glyceroyl phosphate + ADP. It functions in the pathway carbohydrate degradation; glycolysis; pyruvate from D-glyceraldehyde 3-phosphate: step 2/5. In Pseudomonas syringae pv. syringae (strain B728a), this protein is Phosphoglycerate kinase.